Here is a 305-residue protein sequence, read N- to C-terminus: Diacylglycerol kinase (305 aa).

Residues 1–132 (MRKRARIIYN…VDIGKMNSRY (132 aa)) enclose the DAGKc domain. ATP-binding positions include 10–14 (NPTSG), threonine 41, 67–73 (GDGTLNE), and threonine 94. Mg(2+)-binding residues include lysine 213, aspartate 216, and tyrosine 218. The Proton acceptor role is filled by glutamate 273.

It belongs to the diacylglycerol/lipid kinase family. In terms of assembly, homodimer. Requires Mg(2+) as cofactor.

It catalyses the reaction a 1,2-diacyl-sn-glycerol + ATP = a 1,2-diacyl-sn-glycero-3-phosphate + ADP + H(+). In terms of biological role, catalyzes the phosphorylation of diacylglycerol (DAG) into phosphatidic acid. Is a key enzyme involved in the production of lipoteichoic acid by reintroducing DAG formed from the breakdown of membrane phospholipids into the phosphatidylglycerol biosynthetic pathway. This chain is Diacylglycerol kinase (dagK), found in Staphylococcus saprophyticus subsp. saprophyticus (strain ATCC 15305 / DSM 20229 / NCIMB 8711 / NCTC 7292 / S-41).